Here is a 463-residue protein sequence, read N- to C-terminus: ATP-dependent rRNA helicase SPB4 (463 aa).

The Q motif signature appears at 4 to 32 (KGIEDVAMNGRLKKEIEENGFGKMTEVQL). The Helicase ATP-binding domain occupies 35–205 (IPEVLKGKDV…RVFLRNPVSI (171 aa)). 48–55 (SPTGTGKT) serves as a coordination point for ATP. Residues 153–156 (DEAD) carry the DEAD box motif. The region spanning 226–382 (KLLVLMDIVT…DIKSMISPEL (157 aa)) is the Helicase C-terminal domain. Residues 444 to 463 (RDGKKRALPKKKYRKKRAIK) are disordered. Over residues 446–463 (GKKRALPKKKYRKKRAIK) the composition is skewed to basic residues.

This sequence belongs to the DEAD box helicase family. DDX55/SPB4 subfamily. Component of pre-60S ribosomal complexes.

The protein resides in the nucleus. It is found in the nucleolus. It carries out the reaction ATP + H2O = ADP + phosphate + H(+). Functionally, ATP-binding RNA helicase involved in the biogenesis of 60S ribosomal subunits. Binds 90S pre-ribosomal particles and dissociates from pre-60S ribosomal particles after processing of 27SB pre-rRNA. Required for the normal formation of 18S rRNA through the processing of pre-rRNAs at sites A0, A1 and A2, and the normal formation of 25S and 5.8S rRNAs through the processing of pre-rRNAs at sites C1 and C2. The protein is ATP-dependent rRNA helicase SPB4 of Encephalitozoon cuniculi (strain GB-M1) (Microsporidian parasite).